We begin with the raw amino-acid sequence, 291 residues long: Neugrin (291 aa).

An N-terminal signal peptide occupies residues 1 to 15 (MAVTLSLLLGGRVCA). Disordered regions lie at residues 26–48 (GVAGPGPIGREPDPDSDWEPEER) and 155–270 (GSGN…DNFS). A Phosphoserine modification is found at Ser-41. Asn-158 and Asn-186 each carry an N-linked (GlcNAc...) asparagine glycan. The segment covering 236–246 (KYSSDSESPRG) has biased composition (polar residues). Asn-268 is a glycosylation site (N-linked (GlcNAc...) asparagine).

Belongs to the neugrin family. Forms a regulatory protein-RNA complex, consisting of RCC1L, NGRN, RPUSD3, RPUSD4, TRUB2, FASTKD2 and 16S mt-rRNA. Interacts with 16S mt-rRNA; this interaction is direct. In terms of tissue distribution, expressed at high levels in heart, brain and skeletal muscle. In brain, mainly expressed in neurons rather than glial cells.

Its subcellular location is the nucleus. It is found in the secreted. The protein localises to the mitochondrion membrane. Its function is as follows. Plays an essential role in mitochondrial ribosome biogenesis. As a component of a functional protein-RNA module, consisting of RCC1L, NGRN, RPUSD3, RPUSD4, TRUB2, FASTKD2 and 16S mitochondrial ribosomal RNA (16S mt-rRNA), controls 16S mt-rRNA abundance and is required for intra-mitochondrial translation of core subunits of the oxidative phosphorylation system. The polypeptide is Neugrin (Homo sapiens (Human)).